A 173-amino-acid chain; its full sequence is Large ribosomal subunit protein uL15 (173 aa).

A compositionally biased stretch (basic and acidic residues) spans 1–11; that stretch reads MKLNEIRDNQG. A disordered region spans residues 1–50; sequence MKLNEIRDNQGARKSRVRVGRGIGSGLGKTGGRGQKGQKSRSGVSINGFE. Over residues 21-35 the composition is skewed to gly residues; it reads RGIGSGLGKTGGRGQ.

It belongs to the universal ribosomal protein uL15 family. In terms of assembly, part of the 50S ribosomal subunit.

Functionally, binds to the 23S rRNA. This is Large ribosomal subunit protein uL15 from Rhizorhabdus wittichii (strain DSM 6014 / CCUG 31198 / JCM 15750 / NBRC 105917 / EY 4224 / RW1) (Sphingomonas wittichii).